The primary structure comprises 234 residues: Sugar fermentation stimulation protein homolog (234 aa).

Belongs to the SfsA family.

The polypeptide is Sugar fermentation stimulation protein homolog (Shewanella piezotolerans (strain WP3 / JCM 13877)).